The sequence spans 724 residues: Probable metal-nicotianamine transporter YSL13 (724 aa).

A disordered region spans residues 1–54; the sequence is MATVPTPSEAHGGATPTAADVEMVEASELRRRGKPSGDRATGPSRDGAAAAAEE. 14 consecutive transmembrane segments (helical) span residues 80 to 100, 103 to 123, 148 to 168, 190 to 210, 252 to 272, 310 to 330, 355 to 375, 423 to 443, 455 to 475, 487 to 507, 541 to 561, 603 to 623, 640 to 660, and 675 to 695; these read AFVV…KLNL, GIIP…VRLW, CVVA…ILSM, LGWI…GLVP, LGIF…YTAT, IVNV…WPLI, VFIA…KMII, IPWY…IGTV, ILVA…GTGL, LAIF…LAGL, FVSQ…VFWL, LNLC…RDLV, FYIG…LFVW, and VASG…VLAL.

Belongs to the YSL (TC 2.A.67.2) family. Expressed in leaves and at low levels in root cortex.

Its subcellular location is the membrane. In terms of biological role, may be involved in the transport of nicotianamine-chelated metals. The chain is Probable metal-nicotianamine transporter YSL13 (YSL13) from Oryza sativa subsp. japonica (Rice).